Reading from the N-terminus, the 427-residue chain is UDP-N-acetylglucosamine 1-carboxyvinyltransferase 1 (427 aa).

Phosphoenolpyruvate is bound at residue 23–24 (KN). Arginine 96 provides a ligand contact to UDP-N-acetyl-alpha-D-glucosamine. Catalysis depends on cysteine 120, which acts as the Proton donor. Residue cysteine 120 is modified to 2-(S-cysteinyl)pyruvic acid O-phosphothioketal. Residues 125–129 (RPIDL), aspartate 309, and valine 331 contribute to the UDP-N-acetyl-alpha-D-glucosamine site.

Belongs to the EPSP synthase family. MurA subfamily.

Its subcellular location is the cytoplasm. It carries out the reaction phosphoenolpyruvate + UDP-N-acetyl-alpha-D-glucosamine = UDP-N-acetyl-3-O-(1-carboxyvinyl)-alpha-D-glucosamine + phosphate. Its pathway is cell wall biogenesis; peptidoglycan biosynthesis. Functionally, cell wall formation. Adds enolpyruvyl to UDP-N-acetylglucosamine. The sequence is that of UDP-N-acetylglucosamine 1-carboxyvinyltransferase 1 from Streptococcus pneumoniae (strain ATCC BAA-255 / R6).